The chain runs to 141 residues: Nucleoside diphosphate kinase (141 aa).

6 residues coordinate ATP: Lys-11, Phe-59, Arg-87, Thr-93, Arg-104, and Asn-114. Catalysis depends on His-117, which acts as the Pros-phosphohistidine intermediate.

This sequence belongs to the NDK family. Homotetramer. The cofactor is Mg(2+).

The protein resides in the cytoplasm. The catalysed reaction is a 2'-deoxyribonucleoside 5'-diphosphate + ATP = a 2'-deoxyribonucleoside 5'-triphosphate + ADP. The enzyme catalyses a ribonucleoside 5'-diphosphate + ATP = a ribonucleoside 5'-triphosphate + ADP. Major role in the synthesis of nucleoside triphosphates other than ATP. The ATP gamma phosphate is transferred to the NDP beta phosphate via a ping-pong mechanism, using a phosphorylated active-site intermediate. The polypeptide is Nucleoside diphosphate kinase (Burkholderia thailandensis (strain ATCC 700388 / DSM 13276 / CCUG 48851 / CIP 106301 / E264)).